A 393-amino-acid chain; its full sequence is Probable acetyl-CoA acyltransferase (393 aa).

Cysteine 88 (acyl-thioester intermediate) is an active-site residue. Catalysis depends on proton acceptor residues histidine 349 and cysteine 378.

It belongs to the thiolase-like superfamily. Thiolase family.

Its subcellular location is the cytoplasm. The catalysed reaction is 2 acetyl-CoA = acetoacetyl-CoA + CoA. This chain is Probable acetyl-CoA acyltransferase, found in Staphylococcus aureus (strain Mu50 / ATCC 700699).